We begin with the raw amino-acid sequence, 554 residues long: CTP synthase (554 aa).

Residues Met1–Leu265 are amidoligase domain. Position 13 (Ser13) interacts with CTP. A UTP-binding site is contributed by Ser13. Residues Ser14–Ile19 and Asp71 contribute to the ATP site. Mg(2+) contacts are provided by Asp71 and Glu139. Residues Asp146–Glu148, Lys186–Gln191, and Lys222 each bind CTP. UTP contacts are provided by residues Lys186–Gln191 and Lys222. Residues Thr292 to Gly545 enclose the Glutamine amidotransferase type-1 domain. Gly353 contributes to the L-glutamine binding site. Cys380 acts as the Nucleophile; for glutamine hydrolysis in catalysis. L-glutamine-binding positions include Tyr381–Gln384, Glu404, and Arg471. Active-site residues include His518 and Glu520.

The protein belongs to the CTP synthase family. As to quaternary structure, homotetramer.

The catalysed reaction is UTP + L-glutamine + ATP + H2O = CTP + L-glutamate + ADP + phosphate + 2 H(+). The enzyme catalyses L-glutamine + H2O = L-glutamate + NH4(+). It catalyses the reaction UTP + NH4(+) + ATP = CTP + ADP + phosphate + 2 H(+). It functions in the pathway pyrimidine metabolism; CTP biosynthesis via de novo pathway; CTP from UDP: step 2/2. Its activity is regulated as follows. Allosterically activated by GTP, when glutamine is the substrate; GTP has no effect on the reaction when ammonia is the substrate. The allosteric effector GTP functions by stabilizing the protein conformation that binds the tetrahedral intermediate(s) formed during glutamine hydrolysis. Inhibited by the product CTP, via allosteric rather than competitive inhibition. In terms of biological role, catalyzes the ATP-dependent amination of UTP to CTP with either L-glutamine or ammonia as the source of nitrogen. Regulates intracellular CTP levels through interactions with the four ribonucleotide triphosphates. The protein is CTP synthase of Xanthomonas oryzae pv. oryzae (strain MAFF 311018).